The chain runs to 315 residues: Protein-methionine-sulfoxide reductase catalytic subunit MsrP (315 aa).

The segment at residues 1-45 (MPSYRPPKIASSEITPRQVYLRRREFLGAATLGAMALYGAGKASA) is a signal peptide (tat-type signal). Mo-molybdopterin is bound by residues Asn71, 74–75 (YE), Cys129, Thr164, Asn214, Arg219, and 230–232 (GIK).

The protein belongs to the MsrP family. In terms of assembly, heterodimer of a catalytic subunit (MsrP) and a heme-binding subunit (MsrQ). Requires Mo-molybdopterin as cofactor. In terms of processing, predicted to be exported by the Tat system. The position of the signal peptide cleavage has not been experimentally proven.

The protein localises to the periplasm. It catalyses the reaction L-methionyl-[protein] + a quinone + H2O = L-methionyl-(S)-S-oxide-[protein] + a quinol. The enzyme catalyses L-methionyl-[protein] + a quinone + H2O = L-methionyl-(R)-S-oxide-[protein] + a quinol. In terms of biological role, part of the MsrPQ system that repairs oxidized periplasmic proteins containing methionine sulfoxide residues (Met-O), using respiratory chain electrons. Thus protects these proteins from oxidative-stress damage caused by reactive species of oxygen and chlorine generated by the host defense mechanisms. MsrPQ is essential for the maintenance of envelope integrity under bleach stress, rescuing a wide series of structurally unrelated periplasmic proteins from methionine oxidation. The catalytic subunit MsrP is non-stereospecific, being able to reduce both (R-) and (S-) diastereoisomers of methionine sulfoxide. In Rhizobium etli (strain ATCC 51251 / DSM 11541 / JCM 21823 / NBRC 15573 / CFN 42), this protein is Protein-methionine-sulfoxide reductase catalytic subunit MsrP.